A 186-amino-acid polypeptide reads, in one-letter code: Translation initiation factor IF-3 (186 aa).

The protein belongs to the IF-3 family. In terms of assembly, monomer.

Its subcellular location is the cytoplasm. Functionally, IF-3 binds to the 30S ribosomal subunit and shifts the equilibrium between 70S ribosomes and their 50S and 30S subunits in favor of the free subunits, thus enhancing the availability of 30S subunits on which protein synthesis initiation begins. The sequence is that of Translation initiation factor IF-3 from Borrelia garinii subsp. bavariensis (strain ATCC BAA-2496 / DSM 23469 / PBi) (Borreliella bavariensis).